A 357-amino-acid chain; its full sequence is Peptide chain release factor 1 (357 aa).

Gln234 bears the N5-methylglutamine mark. The segment covering 284-307 (KKQEQRSNDRKQQVGSGDRSERIR) has biased composition (basic and acidic residues). The interval 284–313 (KKQEQRSNDRKQQVGSGDRSERIRTYNFPQ) is disordered.

It belongs to the prokaryotic/mitochondrial release factor family. In terms of processing, methylated by PrmC. Methylation increases the termination efficiency of RF1.

The protein localises to the cytoplasm. Peptide chain release factor 1 directs the termination of translation in response to the peptide chain termination codons UAG and UAA. This is Peptide chain release factor 1 from Borrelia hermsii (strain HS1 / DAH).